Consider the following 904-residue polypeptide: Nitrate reductase [NADH] 1 (904 aa).

Composition is skewed to polar residues over residues 1–10 (MAASVENRQF) and 39–50 (STNFQKKPNSTI). The segment at 1–65 (MAASVENRQF…SSEDDDDDDE (65 aa)) is disordered. Acidic residues predominate over residues 56-65 (SSEDDDDDDE). Position 183 (Cys-183) interacts with Mo-molybdopterin. Residues 531-606 (SKMYSMSEVR…LEEFRIGELL (76 aa)) form the Cytochrome b5 heme-binding domain. Heme-binding residues include His-566 and His-589. An FAD-binding FR-type domain is found at 647–759 (REKIPCKLID…KGPLGHIEYQ (113 aa)). Residues 699–702 (RAYT), 716–720 (VVKIY), Phe-721, Phe-728, 733–735 (QMS), and Thr-786 contribute to the FAD site.

It belongs to the nitrate reductase family. Homodimer. It depends on FAD as a cofactor. The cofactor is heme. Mo-molybdopterin is required as a cofactor.

It carries out the reaction nitrite + NAD(+) + H2O = nitrate + NADH + H(+). Its activity is regulated as follows. Regulated by the nitrogen source and controlled by the circadian rhythm. In terms of biological role, nitrate reductase is a key enzyme involved in the first step of nitrate assimilation in plants, fungi and bacteria. The sequence is that of Nitrate reductase [NADH] 1 (NIA1) from Nicotiana tabacum (Common tobacco).